A 1242-amino-acid chain; its full sequence is ATP-dependent helicase/nuclease subunit A (1242 aa).

Residues 13–486 enclose the UvrD-like helicase ATP-binding domain; the sequence is SQWTDDQWKA…IDLAKNFRSR (474 aa). Residue 34–41 participates in ATP binding; that stretch reads AAAGSGKT. In terms of domain architecture, UvrD-like helicase C-terminal spans 506-806; it reads GEIEYDADAE…RIMTIHKSKG (301 aa).

It belongs to the helicase family. AddA subfamily. In terms of assembly, heterodimer of AddA and AddB/RexB. Mg(2+) is required as a cofactor.

It carries out the reaction Couples ATP hydrolysis with the unwinding of duplex DNA by translocating in the 3'-5' direction.. The catalysed reaction is ATP + H2O = ADP + phosphate + H(+). Its function is as follows. The heterodimer acts as both an ATP-dependent DNA helicase and an ATP-dependent, dual-direction single-stranded exonuclease. Recognizes the chi site generating a DNA molecule suitable for the initiation of homologous recombination. The AddA nuclease domain is required for chi fragment generation; this subunit has the helicase and 3' -&gt; 5' nuclease activities. The protein is ATP-dependent helicase/nuclease subunit A of Bacillus cytotoxicus (strain DSM 22905 / CIP 110041 / 391-98 / NVH 391-98).